The following is a 192-amino-acid chain: uncharacterized protein (192 aa).

Disordered stretches follow at residues 1–37 (MASSCPGTPSPAGLPPPSVATPGETLGPAAPPEPAFP) and 146–192 (ARGP…EQNK). Pro residues-rich tracts occupy residues 8-19 (TPSPAGLPPPSV) and 159-180 (APPPPSRSPRPALPATAPPGWP).

This is an uncharacterized protein from Homo sapiens (Human).